We begin with the raw amino-acid sequence, 429 residues long: Septin-11 (429 aa).

Ala2 carries the N-acetylalanine modification. At Ser9 the chain carries Phosphoserine. Positions 38 to 304 (QGFCFNILCV…ELYRRCKLEE (267 aa)) constitute a Septin-type G domain. The segment at 48-55 (GETGIGKS) is G1 motif. GTP is bound by residues 48–55 (GETGIGKS), Gly103, 184–192 (KADTIAKNE), Gly238, and Arg253. Residues 100 to 103 (DTVG) form a G3 motif region. Residues 183-186 (AKAD) form a G4 motif region. Residues 320-415 (QETYEAKRNE…QSQAQQSGAQ (96 aa)) adopt a coiled-coil conformation. Positions 398–429 (KKAAAQLLQSQAQQSGAQQTKKDKDKKNASFT) are disordered. Positions 401-416 (AAQLLQSQAQQSGAQQ) are enriched in low complexity. Residues 417-429 (TKKDKDKKNASFT) are compositionally biased toward basic and acidic residues.

This sequence belongs to the TRAFAC class TrmE-Era-EngA-EngB-Septin-like GTPase superfamily. Septin GTPase family. As to quaternary structure, septins polymerize into heterooligomeric protein complexes that form filaments, and can associate with cellular membranes, actin filaments and microtubules. Forms homooligomers. GTPase activity is required for filament formation. Interacts with SEPTIN7, SEPTIN9 and SEPTIN12. As to expression, widely expressed, except in leukocytes.

The protein localises to the cytoplasm. It is found in the cytoskeleton. Its subcellular location is the synapse. The protein resides in the cell projection. It localises to the dendritic spine. The protein localises to the axon. Functionally, filament-forming cytoskeletal GTPase. May play a role in cytokinesis (Potential). May play a role in the cytoarchitecture of neurons, including dendritic arborization and dendritic spines, and in GABAergic synaptic connectivity. During Listeria monocytogenes infection, not required for the bacterial entry process, but restricts its efficacy. The protein is Septin-11 of Homo sapiens (Human).